Here is a 150-residue protein sequence, read N- to C-terminus: UPF0178 protein Shewana3_1627 (150 aa).

Belongs to the UPF0178 family.

This Shewanella sp. (strain ANA-3) protein is UPF0178 protein Shewana3_1627.